Reading from the N-terminus, the 698-residue chain is Dynein regulatory complex protein 1 (698 aa).

Basic and acidic residues-rich tracts occupy residues A27–K47 and A76–Q90. 2 disordered regions span residues A27–Q50 and S71–Q90. Positions M183–E367 form a coiled coil. A disordered region spans residues S425–A461. The span at G436 to P449 shows a compositional bias: gly residues. Positions Q655–R685 form a coiled coil.

The protein belongs to the DRC1 family. Component of the nexin-dynein regulatory complex (N-DRC). Interacts with DRC4 and DRC5.

Its subcellular location is the cytoplasm. It localises to the cytoskeleton. The protein resides in the cilium axoneme. The protein localises to the flagellum axoneme. Functionally, component of the nexin-dynein regulatory complex (N-DRC) a key regulator of ciliary/flagellar motility which maintains the alignment and integrity of the distal axoneme and regulates microtubule sliding in motile axonemes. Plays a critical role in the assembly of N-DRC and also stabilizes the assembly of multiple inner dynein arms and radial spokes. Coassembles with DRC2 to form a central scaffold needed for assembly of the N-DRC and its attachment to the outer doublet microtubules. The chain is Dynein regulatory complex protein 1 (DRC1) from Chlamydomonas reinhardtii (Chlamydomonas smithii).